The primary structure comprises 202 residues: ATP-dependent Clp protease proteolytic subunit (202 aa).

Catalysis depends on Ser-101, which acts as the Nucleophile. His-126 is an active-site residue.

This sequence belongs to the peptidase S14 family. As to quaternary structure, component of the chloroplastic Clp protease core complex.

It localises to the plastid. The protein resides in the chloroplast stroma. The enzyme catalyses Hydrolysis of proteins to small peptides in the presence of ATP and magnesium. alpha-casein is the usual test substrate. In the absence of ATP, only oligopeptides shorter than five residues are hydrolyzed (such as succinyl-Leu-Tyr-|-NHMec, and Leu-Tyr-Leu-|-Tyr-Trp, in which cleavage of the -Tyr-|-Leu- and -Tyr-|-Trp bonds also occurs).. Its function is as follows. Cleaves peptides in various proteins in a process that requires ATP hydrolysis. Has a chymotrypsin-like activity. Plays a major role in the degradation of misfolded proteins. The chain is ATP-dependent Clp protease proteolytic subunit from Acorus gramineus (Dwarf sweet flag).